Here is a 417-residue protein sequence, read N- to C-terminus: Serine hydroxymethyltransferase 2 (417 aa).

(6S)-5,6,7,8-tetrahydrofolate is bound by residues Leu121 and 125 to 127 (GHL). Lys230 carries the N6-(pyridoxal phosphate)lysine modification. 355-357 (SPF) is a binding site for (6S)-5,6,7,8-tetrahydrofolate.

Belongs to the SHMT family. Homodimer. The cofactor is pyridoxal 5'-phosphate.

It localises to the cytoplasm. The enzyme catalyses (6R)-5,10-methylene-5,6,7,8-tetrahydrofolate + glycine + H2O = (6S)-5,6,7,8-tetrahydrofolate + L-serine. It participates in one-carbon metabolism; tetrahydrofolate interconversion. The protein operates within amino-acid biosynthesis; glycine biosynthesis; glycine from L-serine: step 1/1. Catalyzes the reversible interconversion of serine and glycine with tetrahydrofolate (THF) serving as the one-carbon carrier. This reaction serves as the major source of one-carbon groups required for the biosynthesis of purines, thymidylate, methionine, and other important biomolecules. Also exhibits THF-independent aldolase activity toward beta-hydroxyamino acids, producing glycine and aldehydes, via a retro-aldol mechanism. This chain is Serine hydroxymethyltransferase 2, found in Pseudomonas fluorescens (strain ATCC BAA-477 / NRRL B-23932 / Pf-5).